The sequence spans 208 residues: 3-isopropylmalate dehydratase small subunit (208 aa).

It belongs to the LeuD family. LeuD type 1 subfamily. As to quaternary structure, heterodimer of LeuC and LeuD.

It carries out the reaction (2R,3S)-3-isopropylmalate = (2S)-2-isopropylmalate. Its pathway is amino-acid biosynthesis; L-leucine biosynthesis; L-leucine from 3-methyl-2-oxobutanoate: step 2/4. Catalyzes the isomerization between 2-isopropylmalate and 3-isopropylmalate, via the formation of 2-isopropylmaleate. The sequence is that of 3-isopropylmalate dehydratase small subunit from Gluconobacter oxydans (strain 621H) (Gluconobacter suboxydans).